A 195-amino-acid chain; its full sequence is Cysteine/O-acetylserine efflux protein (195 aa).

Over 1–7 (MTPTLLS) the chain is Periplasmic. Residues 8 to 28 (AFWTYTLITAMTPGPNNILAL) form a helical membrane-spanning segment. Residues 29–46 (SSATTHGFHQSTRVLAGM) are Cytoplasmic-facing. Residues 47-67 (SLGFLIVMLLCAGISFSLAVI) traverse the membrane as a helical segment. Residues 68–69 (DP) lie on the Periplasmic side of the membrane. Residues 70 to 90 (AAVHLLSWAGAAYIVWLAWKI) traverse the membrane as a helical segment. Topologically, residues 91–104 (ATSPTKEDGLQTKP) are cytoplasmic. A helical transmembrane segment spans residues 105-125 (ISFWASFALQFVNVKIILYGV). At 126–141 (TALSTFVLPQTQALSW) the chain is on the periplasmic side. A helical membrane pass occupies residues 142–162 (IVGVSVLLAMIGTFGNVCWAL). Over 163-176 (AGHLFQRLFRQYGR) the chain is Cytoplasmic. The helical transmembrane segment at 177–194 (QLNIVLALLLIYCAVRIF) threads the bilayer. Y195 is a topological domain (periplasmic).

The protein belongs to the Rht family.

The protein localises to the cell inner membrane. It catalyses the reaction O-acetyl-L-serine(in) = O-acetyl-L-serine(out). The catalysed reaction is L-cysteine(in) = L-cysteine(out). Exporter of O-acetylserine (OAS) and cysteine. The chain is Cysteine/O-acetylserine efflux protein (eamB) from Escherichia coli O157:H7.